We begin with the raw amino-acid sequence, 463 residues long: L-seryl-tRNA(Sec) selenium transferase (463 aa).

At Lys-295 the chain carries N6-(pyridoxal phosphate)lysine.

This sequence belongs to the SelA family. In terms of assembly, homodecamer; pentamer of dimers. Binds only one seryl-tRNA(Sec) per dimer. Pyridoxal 5'-phosphate is required as a cofactor.

The protein localises to the cytoplasm. It catalyses the reaction L-seryl-tRNA(Sec) + selenophosphate + H(+) = L-selenocysteinyl-tRNA(Sec) + phosphate. Its pathway is aminoacyl-tRNA biosynthesis; selenocysteinyl-tRNA(Sec) biosynthesis; selenocysteinyl-tRNA(Sec) from L-seryl-tRNA(Sec) (bacterial route): step 1/1. In terms of biological role, converts seryl-tRNA(Sec) to selenocysteinyl-tRNA(Sec) required for selenoprotein biosynthesis. The sequence is that of L-seryl-tRNA(Sec) selenium transferase from Shigella flexneri.